The primary structure comprises 500 residues: Proline/betaine transporter (500 aa).

Residues 1–37 (MLKRKKIKPITLGDVTIIDDGKLRKAITAASLGNAME) lie on the Cytoplasmic side of the membrane. A helical membrane pass occupies residues 38–58 (WFDFGVYGFVAYALGKVFFPG). Residues 59-65 (ADPSVQM) are Periplasmic-facing. The helical transmembrane segment at 66–86 (IAALATFSVPFLIRPLGGLFF) threads the bilayer. Residues 87–97 (GMLGDKYGRQK) are Cytoplasmic-facing. The helical transmembrane segment at 98–118 (ILAITIVIMSISTFCIGLIPS) threads the bilayer. Over 119–121 (YAT) the chain is Periplasmic. The helical transmembrane segment at 122-142 (IGIWAPILLLLCKMAQGFSVG) threads the bilayer. The Cytoplasmic segment spans residues 143–169 (GEYTGASIFVAEYSPDRKRGFMGSWLD). The chain crosses the membrane as a helical span at residues 170-190 (FGSIAGFVLGAGVVVLISTIV). The Periplasmic segment spans residues 191–194 (GEEN). The helical transmembrane segment at 195 to 215 (FLEWGWRIPFFIALPLGIIGL) threads the bilayer. At 216–260 (YLRHALEETPAFQQHVDKLEQGDREGLQDGPKVSFKEIATKHWRS) the chain is on the cytoplasmic side. A helical membrane pass occupies residues 261-281 (LLSCIGLVIATNVTYYMLLTY). Residues 282 to 297 (MPSYLSHNLHYSEDHG) are Periplasmic-facing. The chain crosses the membrane as a helical span at residues 298–318 (VLIIIAIMIGMLFVQPVMGLL). The Cytoplasmic portion of the chain corresponds to 319-325 (SDRFGRR). Residues 326 to 346 (PFVIMGSIALFALAIPAFILI) traverse the membrane as a helical segment. Residues 347–350 (NSNV) are Periplasmic-facing. Residues 351–371 (IGLIFAGLLMLAVILNCFTGV) traverse the membrane as a helical segment. Topologically, residues 372–390 (MASTLPAMFPTHIRYSALA) are cytoplasmic. The chain crosses the membrane as a helical span at residues 391–411 (AAFNISVLIAGLTPTLAAWLV). Topologically, residues 412–416 (ESSQD) are periplasmic. A helical transmembrane segment spans residues 417–437 (LMMPAYYLMVIAVIGLITGIS). At 438-500 (MKETANRPLK…LVQQHPRIDE (63 aa)) the chain is on the cytoplasmic side. Residues 453 to 498 (ASDIQEAKEILGEHYDNIEQKIDDIDQEIAELQVKRSRLVQQHPRI) are a coiled coil.

The protein belongs to the major facilitator superfamily. Metabolite:H+ Symporter (MHS) family (TC 2.A.1.6) family.

It localises to the cell inner membrane. Proton symporter that senses osmotic shifts and responds by importing osmolytes such as proline, glycine betaine, stachydrine, pipecolic acid, ectoine and taurine. It is both an osmosensor and an osmoregulator which is available to participate early in the bacterial osmoregulatory response. The polypeptide is Proline/betaine transporter (proP) (Salmonella typhimurium (strain LT2 / SGSC1412 / ATCC 700720)).